The primary structure comprises 119 residues: Microtubule nucleation factor SSNA1 (119 aa).

T2 carries the N-acetylthreonine modification. Residues 2 to 32 (TQQGAALQNYNNELVKCIEELCQKREELCRQ) form an important for localization to the centrosome region. Residues 13–70 (NELVKCIEELCQKREELCRQIQEEEDEKQRLQNEVRQLTEKLARVNENLARKIASRNE) are a coiled coil.

Belongs to the SSNA1 family. In terms of assembly, self-associates to form fibrils. Also forms dimers as well as monomers. Interacts with SPAST. In terms of tissue distribution, widely expressed.

It is found in the nucleus. The protein localises to the cytoplasm. It localises to the cytoskeleton. The protein resides in the microtubule organizing center. Its subcellular location is the centrosome. It is found in the centriole. The protein localises to the midbody. It localises to the flagellum basal body. The protein resides in the flagellum axoneme. Its subcellular location is the cell projection. It is found in the axon. Microtubule-binding protein which stabilizes dynamic microtubules by slowing growth and shrinkage at both plus and minus ends and serves as a sensor of microtubule damage, protecting microtubules from the microtubule-severing enzyme SPAST. Induces microtubule branching which is mediated by the formation of long SSNA1 fibrils which guide microtubule protofilaments to split apart from the mother microtubule and form daughter microtubules. Plays a role in axon outgrowth and branching. Required for cell division. The protein is Microtubule nucleation factor SSNA1 of Homo sapiens (Human).